The chain runs to 405 residues: Arginine biosynthesis bifunctional protein ArgJ (405 aa).

6 residues coordinate substrate: threonine 167, lysine 190, threonine 201, glutamate 281, asparagine 400, and serine 405. Residue threonine 201 is the Nucleophile of the active site.

Belongs to the ArgJ family. As to quaternary structure, heterotetramer of two alpha and two beta chains.

Its subcellular location is the cytoplasm. The enzyme catalyses N(2)-acetyl-L-ornithine + L-glutamate = N-acetyl-L-glutamate + L-ornithine. It catalyses the reaction L-glutamate + acetyl-CoA = N-acetyl-L-glutamate + CoA + H(+). It functions in the pathway amino-acid biosynthesis; L-arginine biosynthesis; L-ornithine and N-acetyl-L-glutamate from L-glutamate and N(2)-acetyl-L-ornithine (cyclic): step 1/1. It participates in amino-acid biosynthesis; L-arginine biosynthesis; N(2)-acetyl-L-ornithine from L-glutamate: step 1/4. In terms of biological role, catalyzes two activities which are involved in the cyclic version of arginine biosynthesis: the synthesis of N-acetylglutamate from glutamate and acetyl-CoA as the acetyl donor, and of ornithine by transacetylation between N(2)-acetylornithine and glutamate. The polypeptide is Arginine biosynthesis bifunctional protein ArgJ (Nocardia farcinica (strain IFM 10152)).